The sequence spans 161 residues: Cyclic pyranopterin monophosphate synthase (161 aa).

Substrate contacts are provided by residues 75–77 (LCH) and 113–114 (ME). Asp-128 is a catalytic residue.

It belongs to the MoaC family. Homohexamer; trimer of dimers.

The catalysed reaction is (8S)-3',8-cyclo-7,8-dihydroguanosine 5'-triphosphate = cyclic pyranopterin phosphate + diphosphate. It participates in cofactor biosynthesis; molybdopterin biosynthesis. Functionally, catalyzes the conversion of (8S)-3',8-cyclo-7,8-dihydroguanosine 5'-triphosphate to cyclic pyranopterin monophosphate (cPMP). This is Cyclic pyranopterin monophosphate synthase from Citrobacter koseri (strain ATCC BAA-895 / CDC 4225-83 / SGSC4696).